The following is a 373-amino-acid chain: Integrator complex subunit 15 (373 aa).

Belongs to the Integrator subunit 15 family. In terms of assembly, belongs to the multiprotein complex Integrator, at least composed of IntS1, IntS2, IntS3, IntS4, omd/IntS5, IntS6, defl/IntS7, IntS8, IntS9, IntS10, IntS11, IntS12, asun/IntS13, IntS14 and IntS15. The core complex associates with protein phosphatase 2A subunits mts/PP2A and Pp2A-29B, to form the Integrator-PP2A (INTAC) complex.

The protein localises to the nucleus. Its function is as follows. Component of the integrator complex, a multiprotein complex that terminates RNA polymerase II (Pol II) transcription in the promoter-proximal region of genes. The integrator complex provides a quality checkpoint during transcription elongation by driving premature transcription termination of transcripts that are unfavorably configured for transcriptional elongation: the complex terminates transcription by (1) catalyzing dephosphorylation of the C-terminal domain (CTD) of Pol II subunit Rbp1 and Spt5, and (2) degrading the exiting nascent RNA transcript via endonuclease activity. The integrator complex is also involved in the 3'-end processing of the U7 snRNA, and also the spliceosomal snRNAs U1, U2, U4 and U5. This Drosophila melanogaster (Fruit fly) protein is Integrator complex subunit 15.